Here is a 459-residue protein sequence, read N- to C-terminus: UDP-N-acetylmuramoyl-tripeptide--D-alanyl-D-alanine ligase (459 aa).

121 to 127 (GSSGKTT) is an ATP binding site.

This sequence belongs to the MurCDEF family. MurF subfamily.

The protein localises to the cytoplasm. It carries out the reaction D-alanyl-D-alanine + UDP-N-acetyl-alpha-D-muramoyl-L-alanyl-gamma-D-glutamyl-meso-2,6-diaminopimelate + ATP = UDP-N-acetyl-alpha-D-muramoyl-L-alanyl-gamma-D-glutamyl-meso-2,6-diaminopimeloyl-D-alanyl-D-alanine + ADP + phosphate + H(+). Its pathway is cell wall biogenesis; peptidoglycan biosynthesis. Functionally, involved in cell wall formation. Catalyzes the final step in the synthesis of UDP-N-acetylmuramoyl-pentapeptide, the precursor of murein. This Treponema pallidum (strain Nichols) protein is UDP-N-acetylmuramoyl-tripeptide--D-alanyl-D-alanine ligase.